The sequence spans 131 residues: Large ribosomal subunit protein bL19 (131 aa).

Belongs to the bacterial ribosomal protein bL19 family.

Functionally, this protein is located at the 30S-50S ribosomal subunit interface and may play a role in the structure and function of the aminoacyl-tRNA binding site. This is Large ribosomal subunit protein bL19 from Rhodopseudomonas palustris (strain BisB18).